Here is a 316-residue protein sequence, read N- to C-terminus: Uracil-DNA glycosylase (316 aa).

The span at 36-79 (AAAAAPAGAGAGASKPARPSAAARPAKGTPAASAATTATGADAS) shows a compositional bias: low complexity. Positions 36 to 91 (AAAAAPAGAGAGASKPARPSAAARPAKGTPAASAATTATGADASAPPPDPGAPTWD) are disordered. Aspartate 159 functions as the Proton acceptor in the catalytic mechanism.

It belongs to the uracil-DNA glycosylase (UDG) superfamily. UNG family.

It localises to the host nucleus. The catalysed reaction is Hydrolyzes single-stranded DNA or mismatched double-stranded DNA and polynucleotides, releasing free uracil.. In terms of biological role, excises uracil residues from the DNA which can arise as a result of misincorporation of dUMP residues by DNA polymerase or deamination of cytosines. Therefore may reduce deleterious uracil incorporation into the viral genome, particularly in terminally differentiated cells which lack DNA repair enzymes. This Sus scrofa (Pig) protein is Uracil-DNA glycosylase (UL2).